A 174-amino-acid chain; its full sequence is MATEVSTRFIFIKIDALSTLHFIDEGGALSMNGDSIEFLIGKSSLDKGLLKRATKLFTWLFSPEIAKQHLSITRSTESNVYMTDATRYKYIFPEYLLVRYVGTKFPDMKIVADATFKRRNPKGDVIGMLDLSFKEVRVKEVSETKAIELRDSNPGYLLSTTYRESESLPVVSKP.

As to quaternary structure, homomultimer. Interacts with nucleoprotein and with the cytoplasmic domain of glycoprotein.

The protein resides in the virion membrane. It is found in the host endomembrane system. In terms of biological role, plays a major role in assembly and budding of virion. Completely covers the ribonucleoprotein coil and keep it in condensed bullet-shaped form. Inhibits viral transcription and stimulates replication. The sequence is that of Matrix protein (M) from Hordeum vulgare (Barley).